A 239-amino-acid polypeptide reads, in one-letter code: Ribonuclease 3 (239 aa).

The region spanning 12-137 is the RNase III domain; that stretch reads RAKLEALIGH…LIAAIYLDGG (126 aa). Glu50 serves as a coordination point for Mg(2+). Asp54 is an active-site residue. Mg(2+) is bound by residues Asp123 and Glu126. Glu126 is an active-site residue. Residues 162-231 enclose the DRBM domain; it reads DAKTELQEWS…ATKMLEREGI (70 aa).

Belongs to the ribonuclease III family. As to quaternary structure, homodimer. Mg(2+) serves as cofactor.

Its subcellular location is the cytoplasm. It catalyses the reaction Endonucleolytic cleavage to 5'-phosphomonoester.. Its function is as follows. Digests double-stranded RNA. Involved in the processing of primary rRNA transcript to yield the immediate precursors to the large and small rRNAs (23S and 16S). Processes some mRNAs, and tRNAs when they are encoded in the rRNA operon. Processes pre-crRNA and tracrRNA of type II CRISPR loci if present in the organism. In Rhizobium etli (strain ATCC 51251 / DSM 11541 / JCM 21823 / NBRC 15573 / CFN 42), this protein is Ribonuclease 3.